A 465-amino-acid chain; its full sequence is Monogalactosyldiacylglycerol synthase 3, chloroplastic (465 aa).

Residues His86, Arg255, 365–369 (GTIAE), and Glu387 each bind UDP.

It belongs to the glycosyltransferase 28 family. As to expression, expressed mainly in roots. Detected in flowers, leaves, stems, siliques and pollen tubes.

It is found in the plastid. The protein resides in the chloroplast outer membrane. The catalysed reaction is a 1,2-diacyl-sn-glycerol + UDP-alpha-D-galactose = a 1,2-diacyl-3-O-(beta-D-galactosyl)-sn-glycerol + UDP + H(+). It carries out the reaction 1,2-di-(9Z,12Z-octadecadienoyl)-sn-glycerol + UDP-alpha-D-galactose = 1,2-di-(9Z,12Z-octadecadienoyl)-3-beta-D-galactosyl-sn-glycerol + UDP + H(+). The enzyme catalyses 1-(9Z-octadecenoyl)-2-hexadecanoyl-sn-glycerol + UDP-alpha-D-galactose = 1-(9Z-octadecenoyl)-2-hexadecanoyl-3-beta-D-galactosyl-sn-glycerol + UDP + H(+). It catalyses the reaction 1,2-di-(9Z-octadecenoyl)-sn-glycerol + UDP-alpha-D-galactose = 1,2-di-(9Z-octadecenoyl)-3-beta-D-galactosyl-sn-glycerol + UDP + H(+). Its activity is regulated as follows. Inhibited by galvestine-1. In terms of biological role, involved in the synthesis of monogalactosyldiacylglycerol, the major structural component of photosynthetic membranes and in the chloroplast envelope biogenesis. Can use both prokaryotic (18:1/16:0) or eukaryotic (18:2/18:2) 1,2-diacylglycerol species, but operates with some preference for the eukaryotic one. Plays a minor role in galactolipid synthesis in chloroplasts. Is essential for membrane lipid remodeling in phosphate-starved roots. Acts as the major factor involved in digalactosyldiacylglycerol (DGDG) biosynthesis in phosphate-starved roots. Does not seem to be required for plant growth under nutrient-sufficient conditions. Required for membrane lipid remodeling in plants grown in acidic conditions. The chain is Monogalactosyldiacylglycerol synthase 3, chloroplastic from Arabidopsis thaliana (Mouse-ear cress).